Reading from the N-terminus, the 218-residue chain is N-(5'-phosphoribosyl)anthranilate isomerase (218 aa).

This sequence belongs to the TrpF family.

It carries out the reaction N-(5-phospho-beta-D-ribosyl)anthranilate = 1-(2-carboxyphenylamino)-1-deoxy-D-ribulose 5-phosphate. Its pathway is amino-acid biosynthesis; L-tryptophan biosynthesis; L-tryptophan from chorismate: step 3/5. The chain is N-(5'-phosphoribosyl)anthranilate isomerase from Bordetella bronchiseptica (strain ATCC BAA-588 / NCTC 13252 / RB50) (Alcaligenes bronchisepticus).